The chain runs to 297 residues: 4-diphosphocytidyl-2-C-methyl-D-erythritol kinase (297 aa).

Lys19 is an active-site residue. Position 105–115 (105–115 (PIASGIGGGSA)) interacts with ATP. The active site involves Asp147.

This sequence belongs to the GHMP kinase family. IspE subfamily.

It carries out the reaction 4-CDP-2-C-methyl-D-erythritol + ATP = 4-CDP-2-C-methyl-D-erythritol 2-phosphate + ADP + H(+). The protein operates within isoprenoid biosynthesis; isopentenyl diphosphate biosynthesis via DXP pathway; isopentenyl diphosphate from 1-deoxy-D-xylulose 5-phosphate: step 3/6. Catalyzes the phosphorylation of the position 2 hydroxy group of 4-diphosphocytidyl-2C-methyl-D-erythritol. The protein is 4-diphosphocytidyl-2-C-methyl-D-erythritol kinase of Rhizobium etli (strain CIAT 652).